Reading from the N-terminus, the 270-residue chain is 5'-AMP-activated protein kinase subunit beta-1 (270 aa).

Residues 1 to 46 form a disordered region; it reads MGNTSSERAALERHGGHKTPRRDSSGGTKDGDRPKILMDSPEDADL. Gly2 carries the N-myristoyl glycine lipid modification. A Phosphothreonine modification is found at Thr4. Phosphoserine occurs at positions 5 and 6. A Phosphothreonine modification is found at Thr19. A compositionally biased stretch (basic and acidic residues) spans 21–36; the sequence is RRDSSGGTKDGDRPKI. Residues Ser24 and Ser25 each carry the phosphoserine; by autocatalysis modification. A phosphoserine mark is found at Ser40, Ser96, and Ser101. Residues 68-163 form a glycogen-binding domain region; that stretch reads EVNDKAPAQA…QVKKTDFEVF (96 aa). Position 108 is a phosphoserine; by autocatalysis (Ser108). Residue Thr148 is modified to Phosphothreonine. Ser182 is modified (phosphoserine).

The protein belongs to the 5'-AMP-activated protein kinase beta subunit family. As to quaternary structure, AMPK is a heterotrimer of an alpha catalytic subunit (PRKAA1 or PRKAA2), a beta (PRKAB1 or PRKAB2) and a gamma non-catalytic subunits (PRKAG1, PRKAG2 or PRKAG3). Interacts with FNIP1 and FNIP2. Phosphorylated when associated with the catalytic subunit (PRKAA1 or PRKAA2). Phosphorylated by ULK1; leading to negatively regulate AMPK activity and suggesting the existence of a regulatory feedback loop between ULK1 and AMPK.

In terms of biological role, non-catalytic subunit of AMP-activated protein kinase (AMPK), an energy sensor protein kinase that plays a key role in regulating cellular energy metabolism. In response to reduction of intracellular ATP levels, AMPK activates energy-producing pathways and inhibits energy-consuming processes: inhibits protein, carbohydrate and lipid biosynthesis, as well as cell growth and proliferation. AMPK acts via direct phosphorylation of metabolic enzymes, and by longer-term effects via phosphorylation of transcription regulators. Also acts as a regulator of cellular polarity by remodeling the actin cytoskeleton; probably by indirectly activating myosin. Beta non-catalytic subunit acts as a scaffold on which the AMPK complex assembles, via its C-terminus that bridges alpha (PRKAA1 or PRKAA2) and gamma subunits (PRKAG1, PRKAG2 or PRKAG3). The protein is 5'-AMP-activated protein kinase subunit beta-1 (PRKAB1) of Pongo abelii (Sumatran orangutan).